Reading from the N-terminus, the 139-residue chain is uncharacterized protein (139 aa).

It to M.tuberculosis Rv2798c.

This is an uncharacterized protein from Mycobacterium tuberculosis (strain CDC 1551 / Oshkosh).